The sequence spans 540 residues: GMP synthase [glutamine-hydrolyzing] (540 aa).

Residues 24 to 217 (KILIVDFGSQ…VRKVAGLTGD (194 aa)) form the Glutamine amidotransferase type-1 domain. Cys101 functions as the Nucleophile in the catalytic mechanism. Active-site residues include His191 and Glu193. The 198-residue stretch at 218-415 (WTMRAFREEA…LGLPEIFVGR (198 aa)) folds into the GMPS ATP-PPase domain. 245 to 251 (SGGVDSS) contributes to the ATP binding site.

As to quaternary structure, homodimer.

The enzyme catalyses XMP + L-glutamine + ATP + H2O = GMP + L-glutamate + AMP + diphosphate + 2 H(+). It functions in the pathway purine metabolism; GMP biosynthesis; GMP from XMP (L-Gln route): step 1/1. Functionally, catalyzes the synthesis of GMP from XMP. The polypeptide is GMP synthase [glutamine-hydrolyzing] (Nitrobacter hamburgensis (strain DSM 10229 / NCIMB 13809 / X14)).